A 417-amino-acid polypeptide reads, in one-letter code: Multifunctional CCA protein (417 aa).

ATP-binding residues include G8 and R11. CTP-binding residues include G8 and R11. The Mg(2+) site is built by D21 and D23. Residues R91, R137, and R140 each contribute to the ATP site. Positions 91, 137, and 140 each coordinate CTP. Residues 225–326 (SGIHTLMTLQ…LNVLKKTDAF (102 aa)) enclose the HD domain.

This sequence belongs to the tRNA nucleotidyltransferase/poly(A) polymerase family. Bacterial CCA-adding enzyme type 1 subfamily. In terms of assembly, monomer. Can also form homodimers and oligomers. It depends on Mg(2+) as a cofactor. Ni(2+) is required as a cofactor.

The enzyme catalyses a tRNA precursor + 2 CTP + ATP = a tRNA with a 3' CCA end + 3 diphosphate. The catalysed reaction is a tRNA with a 3' CCA end + 2 CTP + ATP = a tRNA with a 3' CCACCA end + 3 diphosphate. In terms of biological role, catalyzes the addition and repair of the essential 3'-terminal CCA sequence in tRNAs without using a nucleic acid template. Adds these three nucleotides in the order of C, C, and A to the tRNA nucleotide-73, using CTP and ATP as substrates and producing inorganic pyrophosphate. tRNA 3'-terminal CCA addition is required both for tRNA processing and repair. Also involved in tRNA surveillance by mediating tandem CCA addition to generate a CCACCA at the 3' terminus of unstable tRNAs. While stable tRNAs receive only 3'-terminal CCA, unstable tRNAs are marked with CCACCA and rapidly degraded. The protein is Multifunctional CCA protein of Neisseria meningitidis serogroup C / serotype 2a (strain ATCC 700532 / DSM 15464 / FAM18).